We begin with the raw amino-acid sequence, 435 residues long: Histidine--tRNA ligase (435 aa).

The protein belongs to the class-II aminoacyl-tRNA synthetase family.

It localises to the cytoplasm. It catalyses the reaction tRNA(His) + L-histidine + ATP = L-histidyl-tRNA(His) + AMP + diphosphate + H(+). The sequence is that of Histidine--tRNA ligase (hisS) from Aeropyrum pernix (strain ATCC 700893 / DSM 11879 / JCM 9820 / NBRC 100138 / K1).